The primary structure comprises 74 residues: UPF0435 protein Bcer98_0391 (74 aa).

This sequence belongs to the UPF0435 family.

The sequence is that of UPF0435 protein Bcer98_0391 from Bacillus cytotoxicus (strain DSM 22905 / CIP 110041 / 391-98 / NVH 391-98).